A 166-amino-acid polypeptide reads, in one-letter code: Large ribosomal subunit protein uL10 (166 aa).

It belongs to the universal ribosomal protein uL10 family. Part of the ribosomal stalk of the 50S ribosomal subunit. The N-terminus interacts with L11 and the large rRNA to form the base of the stalk. The C-terminus forms an elongated spine to which L12 dimers bind in a sequential fashion forming a multimeric L10(L12)X complex.

In terms of biological role, forms part of the ribosomal stalk, playing a central role in the interaction of the ribosome with GTP-bound translation factors. The protein is Large ribosomal subunit protein uL10 of Listeria innocua serovar 6a (strain ATCC BAA-680 / CLIP 11262).